The chain runs to 226 residues: Protein YOP1 homolog (226 aa).

Residues 1-25 are disordered; the sequence is MRMSKLYKNKEKENEKPSNEPPIKQ. Over 1-72 the chain is Cytoplasmic; it reads MRMSKLYKNK…IEFGYKLGIK (72 aa). Over residues 8–18 the composition is skewed to basic and acidic residues; the sequence is KNKEKENEKPS. A helical transmembrane segment spans residues 73 to 92; the sequence is PSYIVVFGGSALFISLVLGW. At 93 to 94 the chain is on the lumenal side; the sequence is GA. Residues 95–113 form a helical membrane-spanning segment; the sequence is ALICNLVGFAYPAYQSFKA. At 114–123 the chain is on the cytoplasmic side; sequence VESQGHAETK. Residues 124-140 traverse the membrane as a helical segment; it reads LWLTYWVVFSLFFFIEY. Topologically, residues 141 to 143 are lumenal; the sequence is LID. A helical membrane pass occupies residues 144-162; sequence IILFWIPFYYVIKLLFLLY. Residues 163–226 are Cytoplasmic-facing; the sequence is LYMPQVRGAE…VQEGVRRRNV (64 aa).

It belongs to the DP1 family. May form oligomers.

The protein resides in the endoplasmic reticulum membrane. Required to generate and maintain the structure of the tubular endoplasmic reticulum network and the digestive (food) vacuole. Induces high curvature in membranes and causes membrane tubule formation. In Plasmodium berghei (strain Anka), this protein is Protein YOP1 homolog.